The following is a 279-amino-acid chain: 3-methyl-2-oxobutanoate hydroxymethyltransferase (279 aa).

Mg(2+) contacts are provided by D44 and D83. Residues D44–S45, D83, and K112 contribute to the 3-methyl-2-oxobutanoate site. Residue E114 coordinates Mg(2+). Residue E180 is the Proton acceptor of the active site.

It belongs to the PanB family. As to quaternary structure, homodecamer; pentamer of dimers. It depends on Mg(2+) as a cofactor.

It localises to the cytoplasm. The catalysed reaction is 3-methyl-2-oxobutanoate + (6R)-5,10-methylene-5,6,7,8-tetrahydrofolate + H2O = 2-dehydropantoate + (6S)-5,6,7,8-tetrahydrofolate. It participates in cofactor biosynthesis; (R)-pantothenate biosynthesis; (R)-pantoate from 3-methyl-2-oxobutanoate: step 1/2. Catalyzes the reversible reaction in which hydroxymethyl group from 5,10-methylenetetrahydrofolate is transferred onto alpha-ketoisovalerate to form ketopantoate. The sequence is that of 3-methyl-2-oxobutanoate hydroxymethyltransferase from Chloroflexus aggregans (strain MD-66 / DSM 9485).